The primary structure comprises 839 residues: Enhancer of polycomb-like protein 1 (839 aa).

Disordered regions lie at residues 350–379 (QKKRKVEPKKEEKAEKASTPVRGGKAAGSA), 393–415 (GSGSPSVSSTHVPPNVSIPPSKI), 608–640 (LADRQKYDRETEPTRQMSSYDKDPSQLNGISSD), and 679–839 (QQQQ…KVDA). The span at 608-620 (LADRQKYDRETEP) shows a compositional bias: basic and acidic residues. Polar residues predominate over residues 621-640 (TRQMSSYDKDPSQLNGISSD). Residues 679–690 (QQQQQQMRNRQQ) show a composition bias toward low complexity. The segment covering 697–713 (PGAGLGGGQGAGGGAGG) has biased composition (gly residues). Residues 714–730 (SRNNSPAPGTNGPQSKM) show a composition bias toward polar residues. Positions 747–786 (QHQQYQQMQQQQQQQQQQQQQRKMGVAPMNAASAAAAMAA) are enriched in low complexity. The segment covering 828–839 (MKQKSELAKVDA) has biased composition (basic and acidic residues).

Belongs to the enhancer of polycomb family. In terms of assembly, component of the NuA4 histone acetyltransferase complex.

The protein resides in the nucleus. Functionally, component of the NuA4 histone acetyltransferase complex which is involved in transcriptional activation of selected genes principally by acetylation of nucleosomal histone H4 and H2A. The NuA4 complex is also involved in DNA repair. Involved in gene silencing by neighboring heterochromatin, blockage of the silencing spreading along the chromosome, and required for cell cycle progression through G2/M. The chain is Enhancer of polycomb-like protein 1 (EPL1) from Yarrowia lipolytica (strain CLIB 122 / E 150) (Yeast).